We begin with the raw amino-acid sequence, 150 residues long: Transcriptional repressor NrdR (150 aa).

The segment at cysteine 3–cysteine 33 is a zinc-finger region. One can recognise an ATP-cone domain in the interval leucine 48 to glutamate 138.

The protein belongs to the NrdR family. Zn(2+) is required as a cofactor.

In terms of biological role, negatively regulates transcription of bacterial ribonucleotide reductase nrd genes and operons by binding to NrdR-boxes. This chain is Transcriptional repressor NrdR, found in Symbiobacterium thermophilum (strain DSM 24528 / JCM 14929 / IAM 14863 / T).